Here is a 472-residue protein sequence, read N- to C-terminus: ATP synthase subunit beta (472 aa).

Residue 157–164 participates in ATP binding; it reads GGAGVGKT.

Belongs to the ATPase alpha/beta chains family. As to quaternary structure, F-type ATPases have 2 components, CF(1) - the catalytic core - and CF(0) - the membrane proton channel. CF(1) has five subunits: alpha(3), beta(3), gamma(1), delta(1), epsilon(1). CF(0) has three main subunits: a(1), b(2) and c(9-12). The alpha and beta chains form an alternating ring which encloses part of the gamma chain. CF(1) is attached to CF(0) by a central stalk formed by the gamma and epsilon chains, while a peripheral stalk is formed by the delta and b chains.

It is found in the cell membrane. It carries out the reaction ATP + H2O + 4 H(+)(in) = ADP + phosphate + 5 H(+)(out). Produces ATP from ADP in the presence of a proton gradient across the membrane. The catalytic sites are hosted primarily by the beta subunits. This is ATP synthase subunit beta from Desulforamulus reducens (strain ATCC BAA-1160 / DSM 100696 / MI-1) (Desulfotomaculum reducens).